The chain runs to 1004 residues: Ephrin type-B receptor 2 (1004 aa).

An N-terminal signal peptide occupies residues 1–19 (MGPLWFCCLPLALLPLLAA). Residues 20–544 (VEETLMDSTT…QTSVQEKLPL (525 aa)) lie on the Extracellular side of the membrane. The Eph LBD domain occupies 21-203 (EETLMDSTTA…FYRKCPRVIQ (183 aa)). Cystine bridges form between Cys63–Cys185 and Cys98–Cys108. Residues Asn266, Asn337, Asn429, Asn478, and Asn483 are each glycosylated (N-linked (GlcNAc...) asparagine). Fibronectin type-III domains are found at residues 325-435 (IPSA…TNQA) and 436-531 (APSA…TMTE). A helical transmembrane segment spans residues 545–565 (IIGSSAAGLVFLIAVVVIIIV). The Cytoplasmic portion of the chain corresponds to 566–1004 (CNRRRGFERA…QMNQIQSVEV (439 aa)). In terms of domain architecture, Protein kinase spans 639-902 (VKIEQVIGAG…QIVNTLDKMI (264 aa)). ATP contacts are provided by residues 645-653 (IGAGEFGEV) and Lys671. Catalysis depends on Asp764, which acts as the Proton acceptor. The 65-residue stretch at 931–995 (TSFNTVDEWL…LNSIQVMRAQ (65 aa)) folds into the SAM domain. The PDZ-binding signature appears at 1002–1004 (VEV).

This sequence belongs to the protein kinase superfamily. Tyr protein kinase family. Ephrin receptor subfamily. In terms of assembly, heterotetramer upon binding of the ligand. The heterotetramer is composed of an ephrin dimer and a receptor dimer. Oligomerization is probably required to induce biological responses. Post-translationally, ligand binding induces cleavage by matrix metalloproteinases (MMPs) such as MMP7/MMP9, producing an EphB2/N-terminal fragment (NTF) and a C-terminal long fragment (EphB2-LF). EphB2-LF is further cleaved by MMPs, producing EphB2/CTF1 which is further cleaved by the PS1/gamma-secretase producing EphB2/CTF2. As to expression, wide tissue distribution throughout development and sustained expression in adult brain. The longer form (CEK5+) is specifically expressed in the central nervous system.

It localises to the cell membrane. Its subcellular location is the cell projection. The protein resides in the axon. The protein localises to the dendrite. The catalysed reaction is L-tyrosyl-[protein] + ATP = O-phospho-L-tyrosyl-[protein] + ADP + H(+). Functionally, receptor tyrosine kinase which binds promiscuously transmembrane ephrin-B family ligands residing on adjacent cells, leading to contact-dependent bidirectional signaling into neighboring cells. The signaling pathway downstream of the receptor is referred to as forward signaling while the signaling pathway downstream of the ephrin ligand is referred to as reverse signaling. Functions in axon guidance during development. In addition to axon guidance, also regulates dendritic spines development and maturation and stimulates the formation of excitatory synapses. The protein is Ephrin type-B receptor 2 (EPHB2) of Gallus gallus (Chicken).